An 81-amino-acid polypeptide reads, in one-letter code: Cytochrome b559 subunit alpha (81 aa).

The helical transmembrane segment at valine 21–tryptophan 35 threads the bilayer. Histidine 23 contacts heme.

The protein belongs to the PsbE/PsbF family. In terms of assembly, heterodimer of an alpha subunit and a beta subunit. PSII is composed of 1 copy each of membrane proteins PsbA, PsbB, PsbC, PsbD, PsbE, PsbF, PsbH, PsbI, PsbJ, PsbK, PsbL, PsbM, PsbT, PsbX, PsbY, PsbZ, Psb30/Ycf12, peripheral proteins PsbO, CyanoQ (PsbQ), PsbU, PsbV and a large number of cofactors. It forms dimeric complexes. It depends on heme b as a cofactor.

The protein localises to the cellular thylakoid membrane. In terms of biological role, this b-type cytochrome is tightly associated with the reaction center of photosystem II (PSII). PSII is a light-driven water:plastoquinone oxidoreductase that uses light energy to abstract electrons from H(2)O, generating O(2) and a proton gradient subsequently used for ATP formation. It consists of a core antenna complex that captures photons, and an electron transfer chain that converts photonic excitation into a charge separation. In Crocosphaera subtropica (strain ATCC 51142 / BH68) (Cyanothece sp. (strain ATCC 51142)), this protein is Cytochrome b559 subunit alpha.